Consider the following 101-residue polypeptide: Small ribosomal subunit protein uS14 (101 aa).

The protein belongs to the universal ribosomal protein uS14 family. In terms of assembly, part of the 30S ribosomal subunit. Contacts proteins S3 and S10.

Its function is as follows. Binds 16S rRNA, required for the assembly of 30S particles and may also be responsible for determining the conformation of the 16S rRNA at the A site. In Phenylobacterium zucineum (strain HLK1), this protein is Small ribosomal subunit protein uS14.